A 334-amino-acid polypeptide reads, in one-letter code: rRNA 2'-O-methyltransferase fibrillarin (334 aa).

A compositionally biased stretch (gly residues) spans 1 to 93 (MEGRGGSRGG…GGKPAAGGKP (93 aa)). Residues 1-94 (MEGRGGSRGG…GKPAAGGKPG (94 aa)) are disordered. Residues 184–185 (TT), 203–204 (EL), 228–229 (DA), and 248–251 (DVAQ) contribute to the S-adenosyl-L-methionine site.

It belongs to the methyltransferase superfamily. Fibrillarin family. As to quaternary structure, component of box C/D small nucleolar ribonucleoprotein (snoRNP) particles. It is associated with the U3, U8 and U13 small nuclear RNAs. Part of the small subunit (SSU) processome, composed of more than 70 proteins and the RNA chaperone small nucleolar RNA (snoRNA) U3. In terms of processing, by homology to other fibrillarins, some or all of the N-terminal domain arginines are modified to asymmetric dimethylarginine (DMA).

Its subcellular location is the nucleus. It is found in the nucleolus. The enzyme catalyses L-glutaminyl-[histone H2A] + S-adenosyl-L-methionine = N(5)-methyl-L-glutaminyl-[histone H2A] + S-adenosyl-L-homocysteine + H(+). Functionally, S-adenosyl-L-methionine-dependent methyltransferase that has the ability to methylate both RNAs and proteins. Involved in pre-rRNA processing. Utilizes the methyl donor S-adenosyl-L-methionine to catalyze the site-specific 2'-hydroxyl methylation of ribose moieties in pre-ribosomal RNA. Site specificity is provided by a guide RNA that base pairs with the substrate. Methylation occurs at a characteristic distance from the sequence involved in base pairing with the guide RNA. Also acts as a protein methyltransferase by mediating methylation of 'Gln-105' of histone H2A (H2AQ105me), a modification that impairs binding of the FACT complex and is specifically present at 35S ribosomal DNA locus. Part of the small subunit (SSU) processome, first precursor of the small eukaryotic ribosomal subunit. During the assembly of the SSU processome in the nucleolus, many ribosome biogenesis factors, an RNA chaperone and ribosomal proteins associate with the nascent pre-rRNA and work in concert to generate RNA folding, modifications, rearrangements and cleavage as well as targeted degradation of pre-ribosomal RNA by the RNA exosome. The chain is rRNA 2'-O-methyltransferase fibrillarin (fbl) from Dictyostelium discoideum (Social amoeba).